Reading from the N-terminus, the 152-residue chain is Lipoprotein signal peptidase (152 aa).

Transmembrane regions (helical) follow at residues 5-25, 61-81, and 84-104; these read LFVLSLILLVALDQLSKFWIV, WFFVVITVLVIGYAIYYLATH, and LNIWKQLALLLIISGGIGNFI. Residues aspartate 114 and aspartate 130 contribute to the active site. A helical membrane pass occupies residues 125 to 145; it reads IFNVADSYLTVGVILLVICLW.

This sequence belongs to the peptidase A8 family.

It is found in the cell membrane. The enzyme catalyses Release of signal peptides from bacterial membrane prolipoproteins. Hydrolyzes -Xaa-Yaa-Zaa-|-(S,diacylglyceryl)Cys-, in which Xaa is hydrophobic (preferably Leu), and Yaa (Ala or Ser) and Zaa (Gly or Ala) have small, neutral side chains.. It participates in protein modification; lipoprotein biosynthesis (signal peptide cleavage). This protein specifically catalyzes the removal of signal peptides from prolipoproteins. The chain is Lipoprotein signal peptidase from Streptococcus pyogenes serotype M2 (strain MGAS10270).